Reading from the N-terminus, the 227-residue chain is Probable cell wall protein PGA42 (227 aa).

The N-terminal stretch at 1–16 (MKFIILLFALIHITVA) is a signal peptide. N192 is a glycosylation site (N-linked (GlcNAc...) asparagine). S200 carries GPI-anchor amidated serine lipidation. Positions 201–227 (GSQIFVLCVISVVGFIFFFLFFLSLFV) are cleaved as a propeptide — removed in mature form.

This sequence belongs to the IHD1 family. In terms of processing, the GPI-anchor is attached to the protein in the endoplasmic reticulum and serves to target the protein to the cell surface. There, the glucosamine-inositol phospholipid moiety is cleaved off and the GPI-modified mannoprotein is covalently attached via its lipidless GPI glycan remnant to the 1,6-beta-glucan of the outer cell wall layer.

It localises to the secreted. It is found in the cell wall. Its subcellular location is the membrane. Functionally, probable GPI-anchored cell wall protein that may be involved in cell wall organization, hyphal growth, as well as in virulence. This Candida albicans (strain SC5314 / ATCC MYA-2876) (Yeast) protein is Probable cell wall protein PGA42 (PGA42).